Consider the following 262-residue polypeptide: Glucosamine-6-phosphate deaminase (262 aa).

Aspartate 63 functions as the Proton acceptor; for enolization step in the catalytic mechanism. Asparagine 129 acts as the For ring-opening step in catalysis. The Proton acceptor; for ring-opening step role is filled by histidine 131. Residue glutamate 136 is the For ring-opening step of the active site.

Belongs to the glucosamine/galactosamine-6-phosphate isomerase family. NagB subfamily.

It carries out the reaction alpha-D-glucosamine 6-phosphate + H2O = beta-D-fructose 6-phosphate + NH4(+). It participates in amino-sugar metabolism; N-acetylneuraminate degradation; D-fructose 6-phosphate from N-acetylneuraminate: step 5/5. Its function is as follows. Catalyzes the reversible isomerization-deamination of glucosamine 6-phosphate (GlcN6P) to form fructose 6-phosphate (Fru6P) and ammonium ion. This chain is Glucosamine-6-phosphate deaminase, found in Bacillus cereus (strain B4264).